A 347-amino-acid chain; its full sequence is Transcription termination/antitermination protein NusA (347 aa).

Residues 112–184 form the S1 motif domain; sequence GEIVAGVIQR…REPLITLSRT (73 aa). Residues 287-347 enclose the KH domain; sequence ARAARVVVPD…GVSRGMAHDR (61 aa). The interval 322–347 is disordered; it reads DIRGDAPPPPPGQPEPGVSRGMAHDR.

This sequence belongs to the NusA family. As to quaternary structure, monomer. Binds directly to the core enzyme of the DNA-dependent RNA polymerase and to nascent RNA.

The protein localises to the cytoplasm. Its function is as follows. Participates in both transcription termination and antitermination. The sequence is that of Transcription termination/antitermination protein NusA from Mycobacterium bovis (strain ATCC BAA-935 / AF2122/97).